We begin with the raw amino-acid sequence, 237 residues long: Sugar fermentation stimulation protein homolog (237 aa).

This sequence belongs to the SfsA family.

In Pseudomonas fluorescens (strain ATCC BAA-477 / NRRL B-23932 / Pf-5), this protein is Sugar fermentation stimulation protein homolog.